The following is a 567-amino-acid chain: Urease subunit alpha (567 aa).

Positions 129–567 (GGIDTHIHFI…LPMAQRYFLF (439 aa)) constitute a Urease domain. 3 residues coordinate Ni(2+): His-134, His-136, and Lys-217. At Lys-217 the chain carries N6-carboxylysine. His-219 contributes to the substrate binding site. Ni(2+) is bound by residues His-246 and His-272. The active-site Proton donor is His-320. Position 360 (Asp-360) interacts with Ni(2+).

This sequence belongs to the metallo-dependent hydrolases superfamily. Urease alpha subunit family. In terms of assembly, heterotrimer of UreA (gamma), UreB (beta) and UreC (alpha) subunits. Three heterotrimers associate to form the active enzyme. It depends on Ni cation as a cofactor. Carboxylation allows a single lysine to coordinate two nickel ions.

Its subcellular location is the cytoplasm. The catalysed reaction is urea + 2 H2O + H(+) = hydrogencarbonate + 2 NH4(+). Its pathway is nitrogen metabolism; urea degradation; CO(2) and NH(3) from urea (urease route): step 1/1. In Delftia acidovorans (strain DSM 14801 / SPH-1), this protein is Urease subunit alpha.